The sequence spans 154 residues: Ribonuclease H (154 aa).

Residues 1–141 (MKRIEAYTDG…ADELARAGME (141 aa)) form the RNase H type-1 domain. Mg(2+) contacts are provided by Asp9, Glu47, Asp69, and Asp133.

The protein belongs to the RNase H family. In terms of assembly, monomer. It depends on Mg(2+) as a cofactor.

The protein localises to the cytoplasm. The enzyme catalyses Endonucleolytic cleavage to 5'-phosphomonoester.. Functionally, endonuclease that specifically degrades the RNA of RNA-DNA hybrids. The sequence is that of Ribonuclease H from Brucella abortus (strain 2308).